The primary structure comprises 184 residues: MKNLKKLIIITGPSGVGKGTVIKELLDRNKDIWLSISATTRNPRVGEKDDLNYYFIGEERFKDMIDKKEFLEWAQFAGNYYGTPLSTVNEKIEKGFIVLLEIEVEGAKQIKEKFPESLSIFLLPPSKEELEKRIRNRGTEKEEAIDRRLSRANYEIASSNQFDFVLTNHDVDETVKEVLKIIKS.

One can recognise a Guanylate kinase-like domain in the interval 5–183; that stretch reads KKLIIITGPS…TVKEVLKIIK (179 aa). ATP is bound at residue 12–19; that stretch reads GPSGVGKG.

Belongs to the guanylate kinase family.

The protein resides in the cytoplasm. The enzyme catalyses GMP + ATP = GDP + ADP. In terms of biological role, essential for recycling GMP and indirectly, cGMP. The chain is Guanylate kinase from Prochlorococcus marinus subsp. pastoris (strain CCMP1986 / NIES-2087 / MED4).